We begin with the raw amino-acid sequence, 61 residues long: Sec-independent protein translocase protein TatA (61 aa).

Residues 2-22 (GLSGISPLSLLLILAIIVALF) form a helical membrane-spanning segment.

The protein belongs to the TatA/E family. In terms of assembly, the Tat system comprises two distinct complexes: a TatABC complex, containing multiple copies of TatA, TatB and TatC subunits, and a separate TatA complex, containing only TatA subunits. Substrates initially bind to the TatABC complex, which probably triggers association of the separate TatA complex to form the active translocon.

The protein resides in the cell inner membrane. Its function is as follows. Part of the twin-arginine translocation (Tat) system that transports large folded proteins containing a characteristic twin-arginine motif in their signal peptide across membranes. TatA could form the protein-conducting channel of the Tat system. The sequence is that of Sec-independent protein translocase protein TatA from Legionella pneumophila (strain Corby).